A 39-amino-acid chain; its full sequence is Photosystem II reaction center protein J (39 aa).

Residues 7–27 (IPLWIVATVAGTGALVVVGLF) form a helical membrane-spanning segment.

It belongs to the PsbJ family. As to quaternary structure, PSII is composed of 1 copy each of membrane proteins PsbA, PsbB, PsbC, PsbD, PsbE, PsbF, PsbH, PsbI, PsbJ, PsbK, PsbL, PsbM, PsbT, PsbX, PsbY, PsbZ, Psb30/Ycf12, peripheral proteins PsbO, CyanoQ (PsbQ), PsbU, PsbV and a large number of cofactors. It forms dimeric complexes.

It is found in the cellular thylakoid membrane. One of the components of the core complex of photosystem II (PSII). PSII is a light-driven water:plastoquinone oxidoreductase that uses light energy to abstract electrons from H(2)O, generating O(2) and a proton gradient subsequently used for ATP formation. It consists of a core antenna complex that captures photons, and an electron transfer chain that converts photonic excitation into a charge separation. This is Photosystem II reaction center protein J from Synechococcus sp. (strain ATCC 27144 / PCC 6301 / SAUG 1402/1) (Anacystis nidulans).